The primary structure comprises 208 residues: Small ribosomal subunit protein uS4 (208 aa).

The interval 28 to 48 is disordered; the sequence is YFEKRPYPPGEHGRARRRTES. The 65-residue stretch at 95 to 159 folds into the S4 RNA-binding domain; it reads MRLDALVLRS…ARTPFQVAAA (65 aa).

It belongs to the universal ribosomal protein uS4 family. In terms of assembly, part of the 30S ribosomal subunit. Contacts protein S5. The interaction surface between S4 and S5 is involved in control of translational fidelity.

In terms of biological role, one of the primary rRNA binding proteins, it binds directly to 16S rRNA where it nucleates assembly of the body of the 30S subunit. Its function is as follows. With S5 and S12 plays an important role in translational accuracy. The protein is Small ribosomal subunit protein uS4 of Beutenbergia cavernae (strain ATCC BAA-8 / DSM 12333 / CCUG 43141 / JCM 11478 / NBRC 16432 / NCIMB 13614 / HKI 0122).